We begin with the raw amino-acid sequence, 146 residues long: MDKQRGFTLIELMVVIGIIAILSAIGIPAYQNYLRKAALTDMLQTFVPYRTAVELCALEHGGLDTCDGGSNGIPSPTTTRYVSAMSVAKGVVSLTGQESLNGLSVVMTPGWDNANGVTGWTRNCNIQSDSALQQACEDVFRFDDAN.

Residues 1–6 (MDKQRG) constitute a propeptide, leader sequence. Position 7 is an N-methylphenylalanine (F7). A helical membrane pass occupies residues 7–27 (FTLIELMVVIGIIAILSAIGI).

Belongs to the N-Me-Phe pilin family.

It is found in the fimbrium. The protein localises to the membrane. Functionally, major component of the type IV pilus (T4P) that plays a role in cell adhesion and motility. Not produced when grown under standard laboratory conditions. This Escherichia coli (strain K12) protein is Prepilin peptidase-dependent protein D (ppdD).